The primary structure comprises 206 residues: Large ribosomal subunit protein uL4 (206 aa).

Residues methionine 63–histidine 98 form a disordered region. The segment covering tyrosine 64–serine 76 has biased composition (basic residues).

The protein belongs to the universal ribosomal protein uL4 family. In terms of assembly, part of the 50S ribosomal subunit.

In terms of biological role, one of the primary rRNA binding proteins, this protein initially binds near the 5'-end of the 23S rRNA. It is important during the early stages of 50S assembly. It makes multiple contacts with different domains of the 23S rRNA in the assembled 50S subunit and ribosome. Functionally, forms part of the polypeptide exit tunnel. This is Large ribosomal subunit protein uL4 from Chelativorans sp. (strain BNC1).